Here is a 308-residue protein sequence, read N- to C-terminus: Ornithine carbamoyltransferase (308 aa).

Residues 56 to 59 (STRT), Gln-83, Arg-107, and 134 to 137 (HPCQ) contribute to the carbamoyl phosphate site. L-ornithine-binding positions include Asn-165, Asp-225, and 229-230 (SM). Residues 264-265 (CL) and Arg-292 each bind carbamoyl phosphate.

This sequence belongs to the aspartate/ornithine carbamoyltransferase superfamily. OTCase family.

The protein localises to the cytoplasm. It catalyses the reaction carbamoyl phosphate + L-ornithine = L-citrulline + phosphate + H(+). It functions in the pathway amino-acid biosynthesis; L-arginine biosynthesis; L-arginine from L-ornithine and carbamoyl phosphate: step 1/3. Functionally, reversibly catalyzes the transfer of the carbamoyl group from carbamoyl phosphate (CP) to the N(epsilon) atom of ornithine (ORN) to produce L-citrulline. This is Ornithine carbamoyltransferase from Nitrobacter winogradskyi (strain ATCC 25391 / DSM 10237 / CIP 104748 / NCIMB 11846 / Nb-255).